The primary structure comprises 66 residues: Large ribosomal subunit protein bL33 (66 aa).

The protein belongs to the bacterial ribosomal protein bL33 family.

This Prochlorococcus marinus (strain MIT 9303) protein is Large ribosomal subunit protein bL33.